A 721-amino-acid chain; its full sequence is Zinc-transporting ATPase (721 aa).

Residues Met-1–Leu-107 lie on the Cytoplasmic side of the membrane. The region spanning Lys-8–Ala-74 is the HMA domain. Zn(2+) is bound by residues Cys-19 and Cys-22. A disordered region spans residues Val-80–Gly-101. The helical transmembrane segment at Lys-108–Glu-128 threads the bilayer. Residues Gln-129–Glu-140 lie on the Extracellular side of the membrane. A helical transmembrane segment spans residues Phe-141–Gly-160. Residues Arg-161–Gln-167 lie on the Cytoplasmic side of the membrane. Residues Ile-168–Gln-187 traverse the membrane as a helical segment. The Extracellular segment spans residues Leu-188–Glu-190. A helical transmembrane segment spans residues Ala-191 to Gly-210. Residues Arg-211–Pro-344 are Cytoplasmic-facing. A helical membrane pass occupies residues Val-345–Gly-363. Residues Ala-364–Trp-369 are Extracellular-facing. Residues Val-370–Ile-387 traverse the membrane as a helical segment. The Cytoplasmic portion of the chain corresponds to Ser-388–Gln-671. Asp-425 acts as the 4-aspartylphosphate intermediate in catalysis. Mg(2+) contacts are provided by Asp-618 and Asp-622. The chain crosses the membrane as a helical span at residues Ile-672 to Ile-693. Residues Gly-694 to Ala-701 lie on the Extracellular side of the membrane. The chain crosses the membrane as a helical span at residues Val-702–Thr-717. Residues Arg-718–Lys-721 are Cytoplasmic-facing.

This sequence belongs to the cation transport ATPase (P-type) (TC 3.A.3) family. Type IB subfamily.

The protein resides in the cell membrane. It catalyses the reaction Zn(2+)(in) + ATP + H2O = Zn(2+)(out) + ADP + phosphate + H(+). The sequence is that of Zinc-transporting ATPase (ziaA) from Synechocystis sp. (strain ATCC 27184 / PCC 6803 / Kazusa).